Reading from the N-terminus, the 260-residue chain is uncharacterized protein (260 aa).

The next 6 membrane-spanning stretches (helical) occupy residues 39–59, 68–88, 111–131, 159–179, 193–213, and 214–234; these read IFYLLFIPLSKNFIYTDLIEA, IIVGIYLSYPIFLYQIWSFLI, FLGSCIGYYLLFPIAFTFFLG, LIFSLSICFQLPVLILFLFKI, FIYLFFFILAAILSPPDILSQ, and FILVIPLILFFEISLFCIKLI.

It belongs to the TatC family.

It localises to the mitochondrion membrane. This is an uncharacterized protein from Reclinomonas americana.